The chain runs to 101 residues: Small ribosomal subunit protein uS14 (101 aa).

Residues 51–70 form a disordered region; the sequence is LPRDSSPSRQRNRCRQTGRP.

The protein belongs to the universal ribosomal protein uS14 family. Part of the 30S ribosomal subunit. Contacts proteins S3 and S10.

In terms of biological role, binds 16S rRNA, required for the assembly of 30S particles and may also be responsible for determining the conformation of the 16S rRNA at the A site. This is Small ribosomal subunit protein uS14 from Salmonella arizonae (strain ATCC BAA-731 / CDC346-86 / RSK2980).